A 151-amino-acid polypeptide reads, in one-letter code: Monooxygenase nsrQ (151 aa).

The protein belongs to the avfA family.

It functions in the pathway secondary metabolite biosynthesis. Functionally, monooxygenase; part of the gene cluster that mediates the biosynthesis of the tetrahydroxanthone dimer neosartorin, which exhibits antibacterial activity. The two different monomeric units appear to be synthesized by the same set of enzymes, among which the Baeyer-Villiger monooxygenase nsrF is the key enzyme for the divergence of the biosynthetic routes. The pathway begins with the synthesis of atrochrysone thioester by the polyketide synthase nsrB. The atrochrysone carboxyl ACP thioesterase nsrC then breaks the thioester bond and releases the atrochrysone carboxylic acid from AacuL. Atrochrysone carboxylic acid is decarboxylated by the decarboxylase nsrE, and oxidized by the anthrone oxygenase nsrD to yield emodin. Emodin is then reduced to emodin hydroquinone by the oxidoreductase nsrR. A-ring reduction by the short chain dehydrogenase nsrJ, dehydration by the scytalone dehydratase-like protein nsrI and probable spontaneous re-oxidation, results in overall deoxygenation to chrysophanol. The Baeyer-Villiger monooxygenase nsrF accepts chrysophanol as a substrate to insert one oxygen atom at two different positions to yield the precursors of both monomric units. NsrF is promiscuous/flexible in interacting with the 2 (non methylated and methylated) aromatic rings of chrysophanol, thus diverging the biosynthetic pathway at this point. After the hydrolysis of the lactones, methylesterification by the methyltransferase nsrG yields respectively moniliphenone and 2,2',6'-trihydroxy-4-methyl-6-methoxya-cyldiphenylmethanone. The next steps are the hydroxylation by the FAD-dependent monooxygenase nsrK, followed by isomerization by the monooxygenase nsrQ. The short chain dehydrogenase/reductase nsrO then catalyzes the C-5 ketoreduction to give the xanthone skeleton of blennolide C and 5-acetylblennolide A. The acetyltransferase nsrL has a strict substrate specificity and uses only blennolide A but not blennolide C to yield 5-acetylblennolide A as the single-acetylated product. In the final step of the biosynthesis, the heterodimerization of the 2 xanthones, blennolide C and 5-acetylblennolide A, is catalyzed by the cytochrome P450 monooxygenase nsrP. NsrP can utilize at least three different xanthones as its substrates to perform the dimerization reaction. The polypeptide is Monooxygenase nsrQ (Aspergillus novofumigatus (strain IBT 16806)).